A 69-amino-acid chain; its full sequence is uncharacterized protein (69 aa).

2 helical membrane-spanning segments follow: residues 7–29 (LLSG…LGSI) and 44–66 (ALQV…LGLL).

The protein localises to the cell membrane. This is an uncharacterized protein from Archaeoglobus fulgidus (strain ATCC 49558 / DSM 4304 / JCM 9628 / NBRC 100126 / VC-16).